The sequence spans 322 residues: Malate dehydrogenase (322 aa).

NAD(+)-binding positions include glycine 10–glycine 15 and aspartate 34. Positions 83 and 89 each coordinate substrate. Residues asparagine 96 and isoleucine 119 to asparagine 121 contribute to the NAD(+) site. Asparagine 121 and arginine 152 together coordinate substrate. Histidine 176 acts as the Proton acceptor in catalysis.

It belongs to the LDH/MDH superfamily. MDH type 3 family.

It carries out the reaction (S)-malate + NAD(+) = oxaloacetate + NADH + H(+). Its function is as follows. Catalyzes the reversible oxidation of malate to oxaloacetate. The polypeptide is Malate dehydrogenase (Mesorhizobium japonicum (strain LMG 29417 / CECT 9101 / MAFF 303099) (Mesorhizobium loti (strain MAFF 303099))).